The chain runs to 304 residues: Large ribosomal subunit protein uL2m (304 aa).

The transit peptide at 1-60 directs the protein to the mitochondrion; sequence MALCALASALRSLSLASPAITARVPTLLPVGQSNVLLQLPSALALPAHRPVHMSADRSAK.

It belongs to the universal ribosomal protein uL2 family. In terms of assembly, component of the mitochondrial ribosome large subunit (39S) which comprises a 16S rRNA and about 50 distinct proteins.

It localises to the mitochondrion. This chain is Large ribosomal subunit protein uL2m (Mrpl2), found in Rattus norvegicus (Rat).